The chain runs to 306 residues: Elongation factor Ts (306 aa).

The segment at 80 to 83 (TDFV) is involved in Mg(2+) ion dislocation from EF-Tu.

It belongs to the EF-Ts family.

It is found in the cytoplasm. Functionally, associates with the EF-Tu.GDP complex and induces the exchange of GDP to GTP. It remains bound to the aminoacyl-tRNA.EF-Tu.GTP complex up to the GTP hydrolysis stage on the ribosome. The chain is Elongation factor Ts from Clostridium novyi (strain NT).